A 310-amino-acid polypeptide reads, in one-letter code: MGKGSMTAHATPNEPDYPPPPGGPPPPADIGRLLLRCHDRPGIIAAVSTFLARAGANIISLDQHSTAPEGGTFLQRAIFHLPGLTAAVDELQRDFGSTVADKFGIDYRFAEAAKPKRVAIMASTEDHCLLDLLWRNRRGELEMSVVMVIANHPDLAAHVRPFGVPFIHIPATRDTRTEAEQRQLQLLSGNVDLVVLARYMQILSPGFLEAIGCPLINIHHSFLPAFTGAAPYQRARERGVKLIGATAHYVTEVLDEGPIIEQDVVRVDHTHTVDDLVRVGADVERAVLSRAVLWHCQDRVIVHHNQTIVF.

The interval 1-30 (MGKGSMTAHATPNEPDYPPPPGGPPPPADI) is disordered. The segment covering 15-28 (PDYPPPPGGPPPPA) has biased composition (pro residues). Residues 32–108 (RLLLRCHDRP…VADKFGIDYR (77 aa)) form the ACT domain. Aspartate 255 is an active-site residue.

The protein belongs to the PurU family.

The catalysed reaction is (6R)-10-formyltetrahydrofolate + H2O = (6S)-5,6,7,8-tetrahydrofolate + formate + H(+). It participates in purine metabolism; IMP biosynthesis via de novo pathway; formate from 10-formyl-5,6,7,8-tetrahydrofolate: step 1/1. Its function is as follows. Catalyzes the hydrolysis of 10-formyltetrahydrofolate (formyl-FH4) to formate and tetrahydrofolate (FH4). This chain is Formyltetrahydrofolate deformylase, found in Mycobacterium bovis (strain ATCC BAA-935 / AF2122/97).